A 43-amino-acid chain; its full sequence is ATCDILSFQSQWVTPNHAGCALHCVIKGYKGGQCKITVCHCRR.

Intrachain disulfides connect Cys3–Cys34, Cys20–Cys39, and Cys24–Cys41.

The protein belongs to the invertebrate defensin family. Type 1 subfamily.

It localises to the secreted. In terms of biological role, antibacterial peptide. Affects Gram-positive bacteria M.luteus, B.megaterium, A.viridans, S.aureus and S.saprophyticus. Moderate activity against P.acidilactici and B.subtilis QB935. Also affects Gram-negative bacterium, D22 form of E.coli. The protein is Defensin of Pyrrhocoris apterus (Sap sucking bug).